A 194-amino-acid chain; its full sequence is [Ribosomal protein uS5]-alanine N-acetyltransferase (194 aa).

The N-acetyltransferase domain maps to 18 to 188 (LVVRLVHDRD…DHVLTALTTP (171 aa)).

It belongs to the acetyltransferase family. RimJ subfamily.

Its subcellular location is the cytoplasm. The enzyme catalyses N-terminal L-alanyl-[ribosomal protein uS5] + acetyl-CoA = N-terminal N(alpha)-acetyl-L-alanyl-[ribosomal protein uS5] + CoA + H(+). In terms of biological role, acetylates the N-terminal alanine of ribosomal protein uS5. The sequence is that of [Ribosomal protein uS5]-alanine N-acetyltransferase (rimJ) from Shigella flexneri.